The following is a 393-amino-acid chain: Formate-dependent phosphoribosylglycinamide formyltransferase (393 aa).

N(1)-(5-phospho-beta-D-ribosyl)glycinamide contacts are provided by residues 22 to 23 and Glu82; that span reads EL. ATP-binding positions include Arg114, Lys155, 160–165, 195–198, and Glu203; these read SSGHGQ and EGFV. In terms of domain architecture, ATP-grasp spans 119–308; that stretch reads RLAAEKLKLP…EFALHARAIL (190 aa). Mg(2+) contacts are provided by Glu267 and Glu279. Residues Asp286, Lys356, and 363 to 364 contribute to the N(1)-(5-phospho-beta-D-ribosyl)glycinamide site; that span reads RR.

Belongs to the PurK/PurT family. As to quaternary structure, homodimer.

It carries out the reaction N(1)-(5-phospho-beta-D-ribosyl)glycinamide + formate + ATP = N(2)-formyl-N(1)-(5-phospho-beta-D-ribosyl)glycinamide + ADP + phosphate + H(+). It functions in the pathway purine metabolism; IMP biosynthesis via de novo pathway; N(2)-formyl-N(1)-(5-phospho-D-ribosyl)glycinamide from N(1)-(5-phospho-D-ribosyl)glycinamide (formate route): step 1/1. Its function is as follows. Involved in the de novo purine biosynthesis. Catalyzes the transfer of formate to 5-phospho-ribosyl-glycinamide (GAR), producing 5-phospho-ribosyl-N-formylglycinamide (FGAR). Formate is provided by PurU via hydrolysis of 10-formyl-tetrahydrofolate. The sequence is that of Formate-dependent phosphoribosylglycinamide formyltransferase from Histophilus somni (strain 129Pt) (Haemophilus somnus).